A 535-amino-acid chain; its full sequence is T-complex protein 1 subunit beta (535 aa).

N-acetylalanine is present on Ala2. A Phosphoserine modification is found at Ser3. An N6-acetyllysine modification is found at Lys13. Residue Gly44 participates in ADP binding. Gly44 serves as a coordination point for ATP. Ser60 is modified (phosphoserine). Position 97 (Asp97) interacts with Mg(2+). Positions 98, 99, 100, and 101 each coordinate ADP. Positions 98, 99, and 100 each coordinate ATP. At Lys154 the chain carries N6-acetyllysine. ADP-binding residues include Ser168 and Ser169. Lys181 bears the N6-acetyllysine mark. A Glycyl lysine isopeptide (Lys-Gly) (interchain with G-Cter in SUMO2) cross-link involves residue Lys248. A Phosphoserine modification is found at Ser260. At Thr261 the chain carries Phosphothreonine. Residues Gly410, Glu495, and Lys500 each coordinate ADP. 2 residues coordinate ATP: Glu495 and Lys500.

It belongs to the TCP-1 chaperonin family. As to quaternary structure, component of the chaperonin-containing T-complex (TRiC), a hexadecamer composed of two identical back-to-back stacked rings enclosing a protein folding chamber. Each ring is made up of eight different subunits: TCP1/CCT1, CCT2, CCT3, CCT4, CCT5, CCT6A/CCT6, CCT7, CCT8. Interacts with PACRG. Interacts with FLCN. Interacts with DLEC1. Interacts with SVEP1.

It localises to the cytoplasm. The enzyme catalyses ATP + H2O = ADP + phosphate + H(+). Functionally, component of the chaperonin-containing T-complex (TRiC), a molecular chaperone complex that assists the folding of actin, tubulin and other proteins upon ATP hydrolysis. The TRiC complex mediates the folding of WRAP53/TCAB1, thereby regulating telomere maintenance. As part of the TRiC complex may play a role in the assembly of BBSome, a complex involved in ciliogenesis regulating transports vesicles to the cilia. The chain is T-complex protein 1 subunit beta (Cct2) from Rattus norvegicus (Rat).